The sequence spans 510 residues: Membrane-bound transcription factor site-2 protease (510 aa).

The Cytoplasmic portion of the chain corresponds to 1-3 (MIP). A helical transmembrane segment spans residues 4 to 24 (VSLVVVVVGGWTAVYLADLVL). Topologically, residues 25–74 (KSSVYFKHSYEDWLEKNGLSISPFHIRWQTSVFNRAFYSWGRRKARMLYQ) are lumenal. 2 helical membrane-spanning segments follow: residues 75 to 95 (WFNFGMVFGVIAMFSSFFLLG) and 96 to 107 (KTLMQTLAQMMA). The Lumenal segment spans residues 108-135 (DSPSSSSSSSSSSSSSSSSSIHNEQVLQ). A helical transmembrane segment spans residues 136 to 160 (VVVPGINLPVNQLTYFFAAVLISGV). His162 is a binding site for Zn(2+). The active site involves Glu163. Helical transmembrane passes span 165 to 177 (GHGIAAIREQVRF), 178 to 200 (NGFGIFLFIIYPGAFVDLFTTHL), and 220 to 242 (FVLALLGILALVLLPVILLPFYY). His166 serves as a coordination point for Zn(2+). Over 243–437 (TGVGVLITEV…LPVIVETFVK (195 aa)) the chain is Lumenal. Residue Asn328 is glycosylated (N-linked (GlcNAc...) asparagine). 2 helical membrane-spanning segments follow: residues 438-455 (YLISLSGALAIVNAVPCF) and 456-467 (ALDGQWILNSFL). The Lumenal portion of the chain corresponds to 468–483 (DATLTSVIGDNDVKDL). A helical membrane pass occupies residues 484-504 (IGFFILLGGSVLLAANVTLGL). The Cytoplasmic portion of the chain corresponds to 505-510 (WMVTAR).

Belongs to the peptidase M50A family. The cofactor is Zn(2+).

Its subcellular location is the membrane. It localises to the cytoplasm. The protein localises to the golgi apparatus membrane. The catalysed reaction is Cleaves several transcription factors that are type-2 transmembrane proteins within membrane-spanning domains. Known substrates include sterol regulatory element-binding protein (SREBP) -1, SREBP-2 and forms of the transcriptional activator ATF6. SREBP-2 is cleaved at the site 477-DRSRILL-|-CVLTFLCLSFNPLTSLLQWGGA-505. The residues Asn-Pro, 11 residues distal to the site of cleavage in the membrane-spanning domain, are important for cleavage by S2P endopeptidase. Replacement of either of these residues does not prevent cleavage, but there is no cleavage if both of these residues are replaced.. In terms of biological role, zinc metalloprotease that mediates intramembrane proteolysis of proteins such as ATF6, ATF6B, SREBF1/SREBP1 and SREBF2/SREBP2. Catalyzes the second step in the proteolytic activation of the sterol regulatory element-binding proteins (SREBPs) SREBF1/SREBP1 and SREBF2/SREBP2: cleaves SREBPs within the first transmembrane segment, thereby releasing the N-terminal segment with a portion of the transmembrane segment attached. Mature N-terminal SREBP fragments shuttle to the nucleus and activate gene transcription. Also mediates the second step in the proteolytic activation of the cyclic AMP-dependent transcription factor ATF-6 (ATF6 and ATF6B). Involved in intramembrane proteolysis during bone formation. In astrocytes and osteoblasts, upon DNA damage and ER stress, mediates the second step of the regulated intramembrane proteolytic activation of the transcription factor CREB3L1, leading to the inhibition of cell-cycle progression. The protein is Membrane-bound transcription factor site-2 protease (MBTPS2) of Cricetulus griseus (Chinese hamster).